The sequence spans 304 residues: MTAPNEPGALSKGDGPNADGLVDRGGAHRAATGPGRIPDAGDPPPWQRAATRQSQAGHRQPPPVSHPEGRPTNPPAAADARLNRFISGASAPVTGPAAAVRTPQPDPDASLGCGDGSPAEAYASELPDLSGPTPRAPQRNPAPARPAEGGAGSRGDSAAGSSGGRSITAESRDARVQLSARRSRGPVRASMQIRRIDPWSTLKVSLLLSVALFFVWMITVAFLYLVLGGMGVWAKLNSNVGDLLNNASGSSAELVSSGTIFGGAFLIGLVNIVLMTALATIGAFVYNLITDLIGGIEVTLADRD.

A disordered region spans residues Met-1–Ser-183. Over residues Pro-132–Ser-166 the composition is skewed to low complexity. The next 2 membrane-spanning stretches (helical) occupy residues Leu-206 to Val-226 and Phe-265 to Val-285.

This sequence to M.leprae ML0007.

Its subcellular location is the cell membrane. This is an uncharacterized protein from Mycobacterium tuberculosis (strain ATCC 25618 / H37Rv).